A 473-amino-acid chain; its full sequence is Photosystem II CP43 reaction center protein (473 aa).

A propeptide spanning residues Met-1–Glu-14 is cleaved from the precursor. Position 15 is an N-acetylthreonine (Thr-15). Residue Thr-15 is modified to Phosphothreonine. The next 5 membrane-spanning stretches (helical) occupy residues Leu-69–Ala-93, Leu-134–Asn-155, Lys-178–Thr-200, Lys-255–Ser-275, and Trp-291–Ala-312. Residue Glu-367 coordinates [CaMn4O5] cluster. Residues Arg-447–Pro-471 form a helical membrane-spanning segment.

Belongs to the PsbB/PsbC family. PsbC subfamily. In terms of assembly, PSII is composed of 1 copy each of membrane proteins PsbA, PsbB, PsbC, PsbD, PsbE, PsbF, PsbH, PsbI, PsbJ, PsbK, PsbL, PsbM, PsbT, PsbX, PsbY, PsbZ, Psb30/Ycf12, at least 3 peripheral proteins of the oxygen-evolving complex and a large number of cofactors. It forms dimeric complexes. The cofactor is Binds multiple chlorophylls and provides some of the ligands for the Ca-4Mn-5O cluster of the oxygen-evolving complex. It may also provide a ligand for a Cl- that is required for oxygen evolution. PSII binds additional chlorophylls, carotenoids and specific lipids..

It localises to the plastid. Its subcellular location is the chloroplast thylakoid membrane. Functionally, one of the components of the core complex of photosystem II (PSII). It binds chlorophyll and helps catalyze the primary light-induced photochemical processes of PSII. PSII is a light-driven water:plastoquinone oxidoreductase, using light energy to abstract electrons from H(2)O, generating O(2) and a proton gradient subsequently used for ATP formation. This chain is Photosystem II CP43 reaction center protein, found in Ipomoea purpurea (Common morning glory).